Consider the following 82-residue polypeptide: Small ribosomal subunit protein bS18 (82 aa).

A disordered region spans residues 1-20 (MSEINQTVTRRPFHRRRKTC).

The protein belongs to the bacterial ribosomal protein bS18 family. As to quaternary structure, part of the 30S ribosomal subunit. Forms a tight heterodimer with protein bS6.

Binds as a heterodimer with protein bS6 to the central domain of the 16S rRNA, where it helps stabilize the platform of the 30S subunit. The protein is Small ribosomal subunit protein bS18 of Bartonella quintana (strain Toulouse) (Rochalimaea quintana).